Here is a 258-residue protein sequence, read N- to C-terminus: Large ribosomal subunit protein bL21 (258 aa).

Basic and acidic residues predominate over residues 140–159 (KAKDAKDEAPKAAPKAEKKK). Positions 140 to 181 (KAKDAKDEAPKAAPKAEKKKAAPKKAKAEAAPAAADEGTRPA) are disordered.

The protein belongs to the bacterial ribosomal protein bL21 family. Part of the 50S ribosomal subunit. Contacts protein L20.

In terms of biological role, this protein binds to 23S rRNA in the presence of protein L20. This Jannaschia sp. (strain CCS1) protein is Large ribosomal subunit protein bL21.